Consider the following 200-residue polypeptide: Holliday junction resolvase RecU (200 aa).

The interval M1 to H25 is disordered. T85, D87, E100, and Q119 together coordinate Mg(2+).

It belongs to the RecU family. The cofactor is Mg(2+).

The protein localises to the cytoplasm. The enzyme catalyses Endonucleolytic cleavage at a junction such as a reciprocal single-stranded crossover between two homologous DNA duplexes (Holliday junction).. Endonuclease that resolves Holliday junction intermediates in genetic recombination. Cleaves mobile four-strand junctions by introducing symmetrical nicks in paired strands. Promotes annealing of linear ssDNA with homologous dsDNA. Required for DNA repair, homologous recombination and chromosome segregation. This Bacillus cereus (strain ZK / E33L) protein is Holliday junction resolvase RecU.